A 574-amino-acid chain; its full sequence is Desiccation/radiation resistance protein DR_1769 (574 aa).

A signal peptide spans 1–33; that stretch reads MPDPAARRFSLPPFPLAALALSVALLGAPASLA. The segment covering 400–438 has biased composition (low complexity); the sequence is TAQTQARQAAAAASTSQQPRLPTLAQAPAPTPAPAQTTP. Positions 400–461 are disordered; the sequence is TAQTQARQAA…APVPPVASPA (62 aa). Positions 439–459 are enriched in pro residues; sequence RPQPTPAQPATPAAPVPPVAS.

Plays an important role in resistance to desiccation and radiation, maybe by protecting genome integrity under extreme conditions. This chain is Desiccation/radiation resistance protein DR_1769, found in Deinococcus radiodurans (strain ATCC 13939 / DSM 20539 / JCM 16871 / CCUG 27074 / LMG 4051 / NBRC 15346 / NCIMB 9279 / VKM B-1422 / R1).